Consider the following 223-residue polypeptide: Glutathione S-transferase U6 (223 aa).

Positions 5–84 (EEVKLLGIWA…YIDETWKHNP (80 aa)) constitute a GST N-terminal domain. Residues 15–16 (SP), 41–42 (NK), 55–56 (KI), and 68–69 (ES) each bind glutathione. Positions 89–216 (DPFQRSKARV…EKHIEHMNNM (128 aa)) constitute a GST C-terminal domain. Threonine 150 is subject to Phosphothreonine.

Belongs to the GST superfamily. Tau family.

It is found in the cytoplasm. The protein localises to the cytosol. It carries out the reaction RX + glutathione = an S-substituted glutathione + a halide anion + H(+). Its function is as follows. May be involved in the conjugation of reduced glutathione to a wide number of exogenous and endogenous hydrophobic electrophiles and have a detoxification role against certain herbicides. This chain is Glutathione S-transferase U6 (GSTU6), found in Arabidopsis thaliana (Mouse-ear cress).